The chain runs to 171 residues: MLP-like protein 31 (171 aa).

It belongs to the MLP family.

The protein is MLP-like protein 31 (MLP31) of Arabidopsis thaliana (Mouse-ear cress).